The primary structure comprises 48 residues: uncharacterized protein (48 aa).

This is an uncharacterized protein from Acidianus hospitalis (AFV-1).